The chain runs to 84 residues: Small ribosomal subunit protein uS17 (84 aa).

This sequence belongs to the universal ribosomal protein uS17 family. As to quaternary structure, part of the 30S ribosomal subunit.

One of the primary rRNA binding proteins, it binds specifically to the 5'-end of 16S ribosomal RNA. The chain is Small ribosomal subunit protein uS17 from Histophilus somni (strain 129Pt) (Haemophilus somnus).